Reading from the N-terminus, the 326-residue chain is MFFLHVRKYKHVIGGLLCLAGCFVISSCSSGRGNKSIDERIHILSMNRMIYDCVSRITGDRVKNIVLIDGSIDPHSYEMVKGDEDRMAISQLIFCNGLGLEHSASLRKHLEGNSKVIDLGARLLDKNCFVLLSEDGFPDPHIWTDMGVWISXVKEMASVLVQQIPQYAEEFQKNAEQILSEMEDLDRWAVRSLATIPEKNRYLVTGHNAFSYFTRRYLSSDEERESGNWKLRCMSPEGLSPEAQISIRDIMRVVEYICANDVGVVFLEDTLNQDALRKIVSCSKSGQKIRLAKSPLYSDNVCDNYFNTFQHNVRTITEELGGTVLE.

Positions 1 to 21 (MFFLHVRKYKHVIGGLLCLAG) are cleaved as a signal peptide. Fe(2+) contacts are provided by His-75, His-141, His-207, and Asp-299.

This sequence belongs to the bacterial solute-binding protein 9 family. Monomer.

It is found in the periplasm. Functionally, part of the ATP-binding cassette (ABC) transport system YtgABCD involved in metal import. Binds Fe(2+), Mn(2+) and Ni(2+), with a preference for Fe(2+) and delivers them to the membrane permease for translocation into the cytoplasm. The chain is Metal-binding protein YtgA from Chlamydia muridarum (strain MoPn / Nigg).